We begin with the raw amino-acid sequence, 384 residues long: Succinyl-diaminopimelate desuccinylase (384 aa).

Zn(2+) is bound at residue His-71. Residue Asp-73 is part of the active site. Asp-104 serves as a coordination point for Zn(2+). Glu-138 (proton acceptor) is an active-site residue. Glu-139, Glu-167, and His-357 together coordinate Zn(2+).

It belongs to the peptidase M20A family. DapE subfamily. Homodimer. Requires Zn(2+) as cofactor. Co(2+) serves as cofactor.

The catalysed reaction is N-succinyl-(2S,6S)-2,6-diaminopimelate + H2O = (2S,6S)-2,6-diaminopimelate + succinate. It participates in amino-acid biosynthesis; L-lysine biosynthesis via DAP pathway; LL-2,6-diaminopimelate from (S)-tetrahydrodipicolinate (succinylase route): step 3/3. Functionally, catalyzes the hydrolysis of N-succinyl-L,L-diaminopimelic acid (SDAP), forming succinate and LL-2,6-diaminopimelate (DAP), an intermediate involved in the bacterial biosynthesis of lysine and meso-diaminopimelic acid, an essential component of bacterial cell walls. The protein is Succinyl-diaminopimelate desuccinylase of Blochmanniella floridana.